Reading from the N-terminus, the 237-residue chain is Terpene cyclase spyD (237 aa).

The next 7 membrane-spanning stretches (helical) occupy residues 17–37, 47–67, 71–91, 109–129, 138–158, 167–187, and 206–226; these read IYNV…IVTV, AIPL…VLVY, YLLF…IVYG, HLPL…YALA, IHGG…CQLL, SWTM…GEFL, and WCTG…WYMG.

It belongs to the paxB family.

The protein localises to the membrane. The catalysed reaction is (S)-(2E,6E,10E)-epoxygeranylgeranyl-triacetate lactone = sartorypyrone F. It catalyses the reaction (S)-(2E,6E,10E)-epoxygeranylgeranyl-triacetate lactone = sartorypyrone D. The protein operates within secondary metabolite biosynthesis; terpenoid biosynthesis. In terms of biological role, terpene cyclase; part of the gene cluster that mediates the biosynthesis of meroterpenoids called sartorypyrones. Within the pathway, spyD catalyzes the cyclization of epoxygeranylgeranyl-triacetate lactone. SpyD exhibits promiscuous activity, resulting in the formation of bicyclic sartorypyrone F and monocyclic sartorypyrone D. The biosynthesis of sartorypyrones begins with the production of triacetic acid lactone (TAL) by the NR-PKS spyA using one molecule of acetyl-CoA and two molecules of malonyl-CoA. The prenyltransferase spyF then conjugates geranylgeranyl pyrophosphate (GGPP) to TAL to form geranylgeranyl-triacetate lactone, for which the pathway-specific geranylgeranyl pyrophosphate synthase (GGPS) spyE is required to provide GGPP. Subsequently, geranylgeranyl-triacetate lactone is epoxidized at the terminal olein by the FAD-dependent monooxygenase spyC, followed by cyclization of the terpenoid component catalyzed by the terpene cyclase spyD to produce both the bicyclic sartorypyrone F and the monocyclic sartorypyrone D. Finally, the last step of the biosynthesis involves the acetylation of the meroterpenoids sartorypyrones D and F by the acetyltransferase SpyB to produce sartorypyrones A and G, respectively. The sequence is that of Terpene cyclase spyD from Aspergillus fumigatus (strain ATCC MYA-4609 / CBS 101355 / FGSC A1100 / Af293) (Neosartorya fumigata).